Here is a 104-residue protein sequence, read N- to C-terminus: Large ribosomal subunit protein uL24 (104 aa).

Belongs to the universal ribosomal protein uL24 family. In terms of assembly, part of the 50S ribosomal subunit.

Functionally, one of two assembly initiator proteins, it binds directly to the 5'-end of the 23S rRNA, where it nucleates assembly of the 50S subunit. In terms of biological role, one of the proteins that surrounds the polypeptide exit tunnel on the outside of the subunit. The polypeptide is Large ribosomal subunit protein uL24 (Klebsiella pneumoniae (strain 342)).